Here is a 313-residue protein sequence, read N- to C-terminus: Potassium channel subfamily K member 6 (313 aa).

Over 1 to 4 (MRRG) the chain is Cytoplasmic. Residues 5 to 25 (ALLAGALAAYAAYLVLGALLV) traverse the membrane as a helical segment. N-linked (GlcNAc...) asparagine glycosylation is found at N79 and N85. Residues 90–115 (AWDFASALFFASTLITTVGYGYTTPL) constitute an intramembrane region (pore-forming). Residues T106, V107, G108, and Y109 each coordinate K(+). The interval 106–111 (TVGYGY) is selectivity filter 1. A helical membrane pass occupies residues 121–141 (AFSIAFALLGVPTTMLLLTAS). The Cytoplasmic portion of the chain corresponds to 142–172 (AQRLSLLLTHVPLSWLSMRWGWDPRRAACWH). A helical membrane pass occupies residues 173–193 (LVALLGVVVTVCFLVPAVIFA). Positions 199 to 223 (WSFLDAFYFCFISLSTIGLGDYVPG) form an intramembrane region, pore-forming. The K(+) site is built by T214, I215, and G216. The tract at residues 214–219 (TIGLGD) is selectivity filter 2. A helical membrane pass occupies residues 236-256 (VLVTVYLFLGLVAMVLVLQTF). Over 257-313 (RHVSDLHGLTELILLPPPCPASFNADEDDRVDILGPQPESHQQLSASSHTDYASIPR) the chain is Cytoplasmic. The short motif at 282-290 (DEDDRVDIL) is the Lysosomal targeting signal element. Residues 288-313 (DILGPQPESHQQLSASSHTDYASIPR) form a disordered region. The span at 295-307 (ESHQQLSASSHTD) shows a compositional bias: polar residues. Residues 308–312 (YASIP) carry the Lysosomal targeting signal motif.

This sequence belongs to the two pore domain potassium channel (TC 1.A.1.8) family. As to quaternary structure, homodimer; disulfide-linked. Post-translationally, N-glycosylation is necessary for targeting to lysosomes. As to expression, widespread expression, detected in all tissues tested except for skeletal muscle. Strongest expression in placenta, pancreas, heart, colon and spleen, lower levels detected in peripheral blood leukocytes, lung, liver, kidney and thymus. Lowest expression detected in brain.

It localises to the late endosome membrane. The protein resides in the lysosome membrane. The enzyme catalyses K(+)(in) = K(+)(out). Functionally, k(+) channel that conducts outward rectifying currents at the membranes of the endolysosomal system. Active in lysosomes where it regulates lysosome numbers and size. In macrophages, enables K(+) efflux coupled to ATP-induced NLRP3 inflammasome activation upon bacterial infection. Cooperates with ATP-gated P2RX7 channels to activate NLRP3 inflammasome, with P2RX7 conducting Ca(2+) and Na(+) influx that sets the membrane potential for K(+) efflux. In terms of biological role, does not display channel activity. In Homo sapiens (Human), this protein is Potassium channel subfamily K member 6.